Here is a 456-residue protein sequence, read N- to C-terminus: Histidine--tRNA ligase (456 aa).

It belongs to the class-II aminoacyl-tRNA synthetase family. Homodimer.

It localises to the cytoplasm. The catalysed reaction is tRNA(His) + L-histidine + ATP = L-histidyl-tRNA(His) + AMP + diphosphate + H(+). The polypeptide is Histidine--tRNA ligase (Borrelia garinii subsp. bavariensis (strain ATCC BAA-2496 / DSM 23469 / PBi) (Borreliella bavariensis)).